Reading from the N-terminus, the 97-residue chain is Co-chaperonin GroES (97 aa).

It belongs to the GroES chaperonin family. Heptamer of 7 subunits arranged in a ring. Interacts with the chaperonin GroEL.

It localises to the cytoplasm. Its function is as follows. Together with the chaperonin GroEL, plays an essential role in assisting protein folding. The GroEL-GroES system forms a nano-cage that allows encapsulation of the non-native substrate proteins and provides a physical environment optimized to promote and accelerate protein folding. GroES binds to the apical surface of the GroEL ring, thereby capping the opening of the GroEL channel. The polypeptide is Co-chaperonin GroES (Buchnera aphidicola subsp. Cinara cedri (strain Cc)).